The following is a 113-amino-acid chain: Large ribosomal subunit protein uL22 (113 aa).

This sequence belongs to the universal ribosomal protein uL22 family. In terms of assembly, part of the 50S ribosomal subunit.

In terms of biological role, this protein binds specifically to 23S rRNA; its binding is stimulated by other ribosomal proteins, e.g. L4, L17, and L20. It is important during the early stages of 50S assembly. It makes multiple contacts with different domains of the 23S rRNA in the assembled 50S subunit and ribosome. Its function is as follows. The globular domain of the protein is located near the polypeptide exit tunnel on the outside of the subunit, while an extended beta-hairpin is found that lines the wall of the exit tunnel in the center of the 70S ribosome. The sequence is that of Large ribosomal subunit protein uL22 from Halalkalibacterium halodurans (strain ATCC BAA-125 / DSM 18197 / FERM 7344 / JCM 9153 / C-125) (Bacillus halodurans).